A 318-amino-acid chain; its full sequence is Ribosomal RNA small subunit methyltransferase H (318 aa).

S-adenosyl-L-methionine-binding positions include 38–40 (GGH), Asp-58, Tyr-86, Asp-107, and Gln-114.

This sequence belongs to the methyltransferase superfamily. RsmH family.

It is found in the cytoplasm. The enzyme catalyses cytidine(1402) in 16S rRNA + S-adenosyl-L-methionine = N(4)-methylcytidine(1402) in 16S rRNA + S-adenosyl-L-homocysteine + H(+). In terms of biological role, specifically methylates the N4 position of cytidine in position 1402 (C1402) of 16S rRNA. The sequence is that of Ribosomal RNA small subunit methyltransferase H from Methylibium petroleiphilum (strain ATCC BAA-1232 / LMG 22953 / PM1).